The primary structure comprises 477 residues: MLKVYNTLTKQKEEFKPLREGEVKMYVCGPTVYDYPHLGHARTYIAFDVIRRYLEHKGYTVLMVMNFTDIDDKIIKRARETGEDPKELAERFIKIFLEDMEALKVKPADIYPRVTDHIDDIIEFIGKLKEKGYAYEGSDGIYFEVKKFPEYGKLSGVKIEDLQKGARVEPGEGKKNPEDFALWKKAKPGEPKWDSPWGEGRPGWHIECSVMSSKYLGESFDIHGGGNDLIFPHHENEIAQSEACFGHEWVKYWLHTGFVMVKGEKMSKSLGNFVTIRELLKRYEPEVIRFFVLQKHYRSPLEYTEEGLQHAKNNLQRLYNTLENIRVALRNAEISYTWGELEFKTYEIIREGKRKFYEAMDDDFNTAEALKAVFEVANAINKYLTEANKPKESILRKALEFFKIVSEVFGVFEDYFREETKEREESEKLIELLVEVRKQLRKEKRYELADMIREELKKLGIQLEDRGSETTWKRIIT.

Cys-28 is a binding site for Zn(2+). The short motif at Pro-30–His-40 is the 'HIGH' region element. Zn(2+) is bound by residues Cys-208, His-233, and Glu-237. The 'KMSKS' region motif lies at Lys-265–Ser-269. Position 268 (Lys-268) interacts with ATP.

Belongs to the class-I aminoacyl-tRNA synthetase family. It depends on Zn(2+) as a cofactor.

Its subcellular location is the cytoplasm. It carries out the reaction tRNA(Cys) + L-cysteine + ATP = L-cysteinyl-tRNA(Cys) + AMP + diphosphate. The sequence is that of Cysteine--tRNA ligase from Pyrococcus furiosus (strain ATCC 43587 / DSM 3638 / JCM 8422 / Vc1).